Here is a 174-residue protein sequence, read N- to C-terminus: MTGIIRNKVFFQIKQGNTPLGRVVFELYNDIVPKTAENFRALCTGEKGIGKSGKPLHYKGSSFHRVIKNFMVQGGDFTHGTGIGGESIYGRTFNDENFLVKHKIGCLSMANAGKNTNGSQFFITTAETPHLNGGHTVFGEVVEGFDIVKKVENAETDRSDRPKAACVIEDCGQL.

The PPIase cyclophilin-type domain maps to 10–173; sequence FFQIKQGNTP…AACVIEDCGQ (164 aa).

This sequence belongs to the cyclophilin-type PPIase family. PPIase D subfamily.

Its subcellular location is the mitochondrion. It carries out the reaction [protein]-peptidylproline (omega=180) = [protein]-peptidylproline (omega=0). Binds cyclosporin A (CsA). CsA mediates some of its effects via an inhibitory action on PPIase. In terms of biological role, PPIases accelerate the folding of proteins. It catalyzes the cis-trans isomerization of proline imidic peptide bonds in oligopeptides. The chain is Peptidyl-prolyl cis-trans isomerase D, mitochondrial (cypD) from Dictyostelium discoideum (Social amoeba).